We begin with the raw amino-acid sequence, 110 residues long: Cation efflux system protein CusF (110 aa).

Positions 1 to 21 are cleaved as a signal peptide; the sequence is MKKALQVAMFSLFTVIGFNAQ.

As to quaternary structure, the cus efflux system is composed of CusA, CusB, CusC and CusF. Interacts with copper-exporting P-type ATPase CopA; when this protein is precharged with copper it binds very little CopA.

Its subcellular location is the periplasm. Functionally, part of a cation efflux system that mediates resistance to copper and silver. Binds one copper per polypeptide. The sequence is that of Cation efflux system protein CusF (cusF) from Escherichia coli (strain K12).